Here is a 48-residue protein sequence, read N- to C-terminus: Phospholipase A2 TI-Nh (48 aa).

His-25 is an active-site residue. Ca(2+) is bound at residue Asp-26.

Belongs to the phospholipase A2 family. Group I subfamily. D49 sub-subfamily. Monomer. Ca(2+) serves as cofactor. In terms of tissue distribution, expressed by the venom gland.

It localises to the secreted. The enzyme catalyses a 1,2-diacyl-sn-glycero-3-phosphocholine + H2O = a 1-acyl-sn-glycero-3-phosphocholine + a fatty acid + H(+). Phospholipase A2 with weak enzymatic activity, which partially inhibits thrombin enzymatic activity (Ki=73 nM), completely inhibits thrombin-induced platelet aggregation and retards fibrin clot formation (IC(50)=0.2 nM). May exert this anticoagulant effect through a non-enzymatic mechanism. In Naja haje haje (Egyptian cobra), this protein is Phospholipase A2 TI-Nh.